The chain runs to 433 residues: L-2-hydroxyglutarate dehydrogenase, mitochondrial (433 aa).

This sequence belongs to the L2HGDH family. Requires FAD as cofactor.

Its subcellular location is the mitochondrion. The catalysed reaction is (S)-2-hydroxyglutarate + A = 2-oxoglutarate + AH2. This chain is L-2-hydroxyglutarate dehydrogenase, mitochondrial, found in Caenorhabditis elegans.